Reading from the N-terminus, the 428-residue chain is Glutamate-1-semialdehyde 2,1-aminomutase (428 aa).

N6-(pyridoxal phosphate)lysine is present on Lys265.

This sequence belongs to the class-III pyridoxal-phosphate-dependent aminotransferase family. HemL subfamily. As to quaternary structure, homodimer. The cofactor is pyridoxal 5'-phosphate.

It localises to the cytoplasm. The enzyme catalyses (S)-4-amino-5-oxopentanoate = 5-aminolevulinate. Its pathway is porphyrin-containing compound metabolism; protoporphyrin-IX biosynthesis; 5-aminolevulinate from L-glutamyl-tRNA(Glu): step 2/2. The sequence is that of Glutamate-1-semialdehyde 2,1-aminomutase from Shewanella frigidimarina (strain NCIMB 400).